The chain runs to 243 residues: Phosphoribosylaminoimidazole-succinocarboxamide synthase (243 aa).

The protein belongs to the SAICAR synthetase family.

The enzyme catalyses 5-amino-1-(5-phospho-D-ribosyl)imidazole-4-carboxylate + L-aspartate + ATP = (2S)-2-[5-amino-1-(5-phospho-beta-D-ribosyl)imidazole-4-carboxamido]succinate + ADP + phosphate + 2 H(+). It participates in purine metabolism; IMP biosynthesis via de novo pathway; 5-amino-1-(5-phospho-D-ribosyl)imidazole-4-carboxamide from 5-amino-1-(5-phospho-D-ribosyl)imidazole-4-carboxylate: step 1/2. In Prochlorococcus marinus (strain MIT 9211), this protein is Phosphoribosylaminoimidazole-succinocarboxamide synthase.